Reading from the N-terminus, the 151-residue chain is MEEYVIYTDGACLGNPGPGGWAAVIIQRGTNEKIISGREADSTNNKMELLAVIKALESFEQKGKRVTVYTDSTYVYKGITAWIESWMKNKWRNSSGGAVKNKEMWVRLHGIAAAHTVRWLWVKAHNGDHYNEIVDRVARKEAASFTNCEPE.

The region spanning 1–143 (MEEYVIYTDG…VDRVARKEAA (143 aa)) is the RNase H type-1 domain. Residues D9, E48, D71, and D135 each coordinate Mg(2+).

This sequence belongs to the RNase H family. In terms of assembly, monomer. Mg(2+) is required as a cofactor.

The protein resides in the cytoplasm. It catalyses the reaction Endonucleolytic cleavage to 5'-phosphomonoester.. Endonuclease that specifically degrades the RNA of RNA-DNA hybrids. This is Ribonuclease H from Neorickettsia sennetsu (strain ATCC VR-367 / Miyayama) (Ehrlichia sennetsu).